Reading from the N-terminus, the 306-residue chain is Ribosomal protein L11 methyltransferase (306 aa).

4 residues coordinate S-adenosyl-L-methionine: T154, G179, D201, and N242.

Belongs to the methyltransferase superfamily. PrmA family.

It localises to the cytoplasm. The enzyme catalyses L-lysyl-[protein] + 3 S-adenosyl-L-methionine = N(6),N(6),N(6)-trimethyl-L-lysyl-[protein] + 3 S-adenosyl-L-homocysteine + 3 H(+). Functionally, methylates ribosomal protein L11. This Stenotrophomonas maltophilia (strain R551-3) protein is Ribosomal protein L11 methyltransferase.